We begin with the raw amino-acid sequence, 101 residues long: Albumin (101 aa).

2 Albumin domains span residues 1 to 80 and 81 to 101; these read DAEH…AFXY and ESGA…PDVL. Histidine 4 is a binding site for Cu cation.

It belongs to the ALB/AFP/VDB family. As to expression, plasma.

The protein resides in the secreted. Functionally, binds water, Ca(2+), Na(+), K(+), fatty acids, hormones, bilirubin and drugs. Its main function is the regulation of the colloidal osmotic pressure of blood. This is Albumin (alb) from Neoceratodus forsteri (Australian lungfish).